The sequence spans 284 residues: 2-dehydro-3-deoxyphosphooctonate aldolase (284 aa).

The protein belongs to the KdsA family.

Its subcellular location is the cytoplasm. The enzyme catalyses D-arabinose 5-phosphate + phosphoenolpyruvate + H2O = 3-deoxy-alpha-D-manno-2-octulosonate-8-phosphate + phosphate. It functions in the pathway carbohydrate biosynthesis; 3-deoxy-D-manno-octulosonate biosynthesis; 3-deoxy-D-manno-octulosonate from D-ribulose 5-phosphate: step 2/3. The protein operates within bacterial outer membrane biogenesis; lipopolysaccharide biosynthesis. This is 2-dehydro-3-deoxyphosphooctonate aldolase from Haemophilus influenzae (strain PittEE).